The following is a 203-amino-acid chain: Dephospho-CoA kinase (203 aa).

Positions 6–203 (KVAITGGLSC…ELYQELKIYI (198 aa)) constitute a DPCK domain. 14 to 19 (SCGKSS) provides a ligand contact to ATP.

This sequence belongs to the CoaE family.

The protein resides in the cytoplasm. The catalysed reaction is 3'-dephospho-CoA + ATP = ADP + CoA + H(+). The protein operates within cofactor biosynthesis; coenzyme A biosynthesis; CoA from (R)-pantothenate: step 5/5. Catalyzes the phosphorylation of the 3'-hydroxyl group of dephosphocoenzyme A to form coenzyme A. The sequence is that of Dephospho-CoA kinase from Protochlamydia amoebophila (strain UWE25).